A 281-amino-acid polypeptide reads, in one-letter code: Pantothenate synthetase (281 aa).

30–37 provides a ligand contact to ATP; the sequence is MGYLHEGH. Residue histidine 37 is the Proton donor of the active site. Residue glutamine 61 coordinates (R)-pantoate. Glutamine 61 provides a ligand contact to beta-alanine. 147–150 serves as a coordination point for ATP; the sequence is GQKD. Glutamine 153 provides a ligand contact to (R)-pantoate. ATP contacts are provided by residues valine 176 and 184-187; that span reads MSSR.

Belongs to the pantothenate synthetase family. As to quaternary structure, homodimer.

The protein localises to the cytoplasm. It carries out the reaction (R)-pantoate + beta-alanine + ATP = (R)-pantothenate + AMP + diphosphate + H(+). It participates in cofactor biosynthesis; (R)-pantothenate biosynthesis; (R)-pantothenate from (R)-pantoate and beta-alanine: step 1/1. In terms of biological role, catalyzes the condensation of pantoate with beta-alanine in an ATP-dependent reaction via a pantoyl-adenylate intermediate. The protein is Pantothenate synthetase of Acetivibrio thermocellus (strain ATCC 27405 / DSM 1237 / JCM 9322 / NBRC 103400 / NCIMB 10682 / NRRL B-4536 / VPI 7372) (Clostridium thermocellum).